The following is a 363-amino-acid chain: Alanine racemase (363 aa).

The Proton acceptor; specific for D-alanine role is filled by lysine 34. The residue at position 34 (lysine 34) is an N6-(pyridoxal phosphate)lysine. Residue arginine 129 participates in substrate binding. Tyrosine 256 functions as the Proton acceptor; specific for L-alanine in the catalytic mechanism. Methionine 304 lines the substrate pocket.

It belongs to the alanine racemase family. The cofactor is pyridoxal 5'-phosphate.

The catalysed reaction is L-alanine = D-alanine. It participates in amino-acid biosynthesis; D-alanine biosynthesis; D-alanine from L-alanine: step 1/1. Catalyzes the interconversion of L-alanine and D-alanine. May also act on other amino acids. In Edwardsiella ictaluri (strain 93-146), this protein is Alanine racemase (alr).